A 187-amino-acid polypeptide reads, in one-letter code: Guanylate kinase (187 aa).

In terms of domain architecture, Guanylate kinase-like spans 5 to 183; the sequence is GRLTVLTGPS…ALKQLETHMQ (179 aa). 12–19 provides a ligand contact to ATP; sequence GPSGVGKG.

It belongs to the guanylate kinase family.

Its subcellular location is the cytoplasm. The enzyme catalyses GMP + ATP = GDP + ADP. It carries out the reaction dZMP + ATP = dZDP + ADP. Its pathway is purine metabolism. Functionally, essential for recycling GMP and indirectly, cGMP. In terms of biological role, (Microbial infection) Catalyzes the phosphorylation of dZMP to dZDP, when the bacterium is infected by a phage that produces the substrate for the synthesis of dZTP (2- amino-2'-deoxyadenosine 5'-triphosphate), which is then used by the phage as a DNA polymerase substrate. The sequence is that of Guanylate kinase from Synechococcus sp. (strain CC9902).